Here is a 768-residue protein sequence, read N- to C-terminus: ATP-dependent zinc metalloprotease FtsH (768 aa).

Residues 1–33 lie on the Cytoplasmic side of the membrane; the sequence is MADRDKNDIRKRLEELRKDNNRRNNRQDNGNRS. Residues 34 to 54 traverse the membrane as a helical segment; that stretch reads PFSGFLFFIFVILLFTFTLLF. The Periplasmic segment spans residues 55-139; it reads HRDIQTYFQE…KLNSLQPSGG (85 aa). Residues 140 to 160 traverse the membrane as a helical segment; it reads GFFLLLLGQFLPMIIMIGLMV. The Cytoplasmic portion of the chain corresponds to 161-768; the sequence is YLAKKMVGGS…SNFKLPSFME (608 aa). 238-245 is an ATP binding site; that stretch reads GRPGTGKT. A Zn(2+)-binding site is contributed by His-461. Residue Glu-462 is part of the active site. Zn(2+)-binding residues include His-465 and Asp-536. The interval 647–768 is disordered; it reads EESIQKGSEG…SNFKLPSFME (122 aa). The span at 669 to 698 shows a compositional bias: basic and acidic residues; the sequence is QENKTVEAEVHDSNLKSDTEKLAEAVREIT. Positions 715–731 are enriched in acidic residues; that stretch reads KDSDDNEKNDDDNENSD.

The protein in the central section; belongs to the AAA ATPase family. It in the C-terminal section; belongs to the peptidase M41 family. Homohexamer. Zn(2+) is required as a cofactor.

The protein resides in the cell inner membrane. Acts as a processive, ATP-dependent zinc metallopeptidase for both cytoplasmic and membrane proteins. Plays a role in the quality control of integral membrane proteins. The protein is ATP-dependent zinc metalloprotease FtsH of Leptotrichia buccalis (strain ATCC 14201 / DSM 1135 / JCM 12969 / NCTC 10249 / C-1013-b).